Here is a 2004-residue protein sequence, read N- to C-terminus: Histone acetyltransferase KAT6A (2004 aa).

Positions 1-77 (MVKLANPLYT…LNSYKDPDNP (77 aa)) constitute an SAMD1-like winged helix (WH) domain. The required for activation of RUNX1-1 stretch occupies residues 1 to 144 (MVKLANPLYT…FGGSAASGFH (144 aa)). The segment at 52 to 166 (ELSVKDGTIL…HGRLLKDGPL (115 aa)) is required for nuclear localization. Residues 95–171 (QNVDWNKLIK…KDGPLYRLNT (77 aa)) form the H15 domain. An interaction with PML region spans residues 144-664 (HQQLRLAIKR…RKGYGRFLID (521 aa)). The residue at position 172 (K172) is an N6-acetyllysine. PHD-type zinc fingers lie at residues 206–265 (IPIC…CKTC) and 259–313 (CIEC…CRPR). The segment at 312–664 (PRKKGRKLLQ…RKGYGRFLID (353 aa)) is interaction with RUNX1-1. Positions 334 to 375 (PIGRPKNRLKKQNTVSKGPFSKVRTGPGRGRKRKITLSSQSA) are disordered. N6-acetyllysine occurs at positions 350 and 355. T369 carries the phosphothreonine; by PKB/AKT1 modification. Residue S420 is modified to Phosphoserine. Positions 441–464 (KRGNRKSSTSDWPTDNQDGWDGKQ) are disordered. A compositionally biased stretch (polar residues) spans 446–457 (KSSTSDWPTDNQ). At S473 the chain carries Phosphoserine. A catalytic region spans residues 488–778 (IQEQALQKVG…VDPECLRWTP (291 aa)). The MYST-type HAT domain maps to 504 to 778 (PQVRCPSVIE…VDPECLRWTP (275 aa)). Residues 507-810 (RCPSVIEFGK…EPQCQERELE (304 aa)) are mediates interaction with BRPF1, required for histone H3 acetyltransferase activity. A C2HC MYST-type zinc finger spans residues 537–562 (LYLCEFCLKYMKSRTILQQHMKKCGW). K604 bears the N6-acetyllysine; by autocatalysis mark. Acetyl-CoA contacts are provided by residues 645–649 (SCIMI) and 654–660 (QRKGYGR). The active-site Proton donor/acceptor is E680. S684 lines the acetyl-CoA pocket. 3 disordered regions span residues 785-1445 (VVSE…AYQD), 1461-1621 (QADE…MMQQ), and 1637-1721 (SCVV…MEIP). Phosphoserine occurs at positions 787 and 812. Residues 787 to 803 (SEEEEEEAEEGENEEPQ) are compositionally biased toward acidic residues. K815 bears the N6-acetyllysine mark. The segment covering 817–836 (VSHENKEQDSYSVESEKKPE) has biased composition (basic and acidic residues). A Glycyl lysine isopeptide (Lys-Gly) (interchain with G-Cter in SUMO2) cross-link involves residue K834. Residues 864-873 (RRGRWGRKNR) are compositionally biased toward basic residues. Positions 874–888 (KTQERFGDKDSKLLL) are enriched in basic and acidic residues. Y899 is modified (phosphotyrosine). Composition is skewed to basic and acidic residues over residues 931–942 (GKPDLPKRRLSE) and 953–980 (KSPEALKCRLTEGSERLPRRYSEGDRAV). A phosphoserine mark is found at S941, S954, and S974. An N6-acetyllysine modification is found at K1007. The span at 1009 to 1030 (TLKRKKPFLHRRRRVRKRKHHN) shows a compositional bias: basic residues. The segment covering 1031-1042 (SSVVTETISETT) has biased composition (low complexity). 2 stretches are compositionally biased toward acidic residues: residues 1043–1053 (EVLDEPFEDSD) and 1065–1078 (FEIDEEEEEEDENE). A phosphoserine mark is found at S1089, S1090, and S1113. Residues 1107-1118 (EEEDEESDDADD) show a composition bias toward acidic residues. A compositionally biased stretch (basic residues) spans 1146–1172 (LKKKKGWPKGKSRKPIHWKKRPGRKPG). Residues 1203-1223 (KIQESEETVEPKEDMPLPEER) are compositionally biased toward basic and acidic residues. Positions 1224 to 1245 (KEEEEMQAEAEEAEEGEEEDAA) are enriched in acidic residues. A compositionally biased stretch (low complexity) spans 1246–1262 (SSEVPAASPADSSNSPE). A compositionally biased stretch (basic and acidic residues) spans 1275 to 1287 (EKPRVSEEQRQSE). Over residues 1288 to 1305 (EEQQELEEPEPEEEEDAA) the composition is skewed to acidic residues. Composition is skewed to basic and acidic residues over residues 1323–1345 (HLESTKKKELEEQPTREDVKEEP), 1358–1367 (KSREKIKDKE), and 1398–1420 (EDSHTKEELIELKEEEEIPHSEL). Residue K1342 forms a Glycyl lysine isopeptide (Lys-Gly) (interchain with G-Cter in SUMO2) linkage. Residues 1481-1503 (SPISSVQSHPSQSVRSVSSPNVP) show a composition bias toward low complexity. Residues 1508 to 1529 (GYTQISPEQGSLSAPSMQNMET) show a composition bias toward polar residues. The tract at residues 1517–1642 (GSLSAPSMQN…KSPQSCVVER (126 aa)) is interaction with RUNX1-2. Residues 1517–1741 (GSLSAPSMQN…YERIPGDFGA (225 aa)) are interaction with PML. Residues 1534–1548 (DVPSVSDHSQQVVDS) are compositionally biased toward low complexity. Over residues 1556–1573 (IESTTENYENPSSYDSTM) the composition is skewed to polar residues. Positions 1574-1621 (GGSICGNSSSQSSCSYGGLSSSSSLTQSSCVVTQQMASMGSSCSMMQQ) are enriched in low complexity. Residues 1650–1699 (QPPPPPPQQPQPPPPQPQPAPQPPPPQQQPQQQPQPQPQQPPPPPPPQQQ) show a composition bias toward pro residues. The segment covering 1702-1712 (LSQCSMNNSFT) has biased composition (polar residues). Residues 1913 to 1948 (SMNMNTLNAMNSYRMTQPMMNSSYHSNPAYMNQTAQ) form a required for activation of RUNX1-2 region.

Belongs to the MYST (SAS/MOZ) family. As to quaternary structure, component of the MOZ/MORF complex composed at least of ING5, KAT6A, KAT6B, MEAF6 and one of BRPF1, BRD1/BRPF2 and BRPF3. Interacts with RUNX1; phosphorylation of RUNX1 enhances the interaction. Interacts with RUNX2. Interacts with p53/TP53. Interacts with PML (isoform PML-4) and this interaction positively regulates its acetylation activity towards p53/TP53. Post-translationally, autoacetylation at Lys-604 is required for proper function. Autoacetylated. In terms of processing, phosphorylation at Thr-369 by PKB/AKT1 inhibits its interaction with PML and negatively regulates its acetylation activity towards p53/TP53.

The protein resides in the nucleus. It localises to the nucleolus. It is found in the nucleoplasm. The protein localises to the PML body. The enzyme catalyses L-lysyl-[protein] + acetyl-CoA = N(6)-acetyl-L-lysyl-[protein] + CoA + H(+). Its function is as follows. Histone acetyltransferase that acetylates lysine residues in histone H3 and histone H4 (in vitro). Component of the MOZ/MORF complex which has a histone H3 acetyltransferase activity. May act as a transcriptional coactivator for RUNX1 and RUNX2. Acetylates p53/TP53 at 'Lys-120' and 'Lys-382' and controls its transcriptional activity via association with PML. The protein is Histone acetyltransferase KAT6A (KAT6A) of Homo sapiens (Human).